Here is a 282-residue protein sequence, read N- to C-terminus: Phosphate import ATP-binding protein PstB (282 aa).

In terms of domain architecture, ABC transporter spans 36–277 (IEVKNLNFFY…PARKETEDYI (242 aa)). 68–75 (GPSGCGKS) lines the ATP pocket.

The protein belongs to the ABC transporter superfamily. Phosphate importer (TC 3.A.1.7) family. The complex is composed of two ATP-binding proteins (PstB), two transmembrane proteins (PstC and PstA) and a solute-binding protein (PstS).

It is found in the cell inner membrane. It catalyses the reaction phosphate(out) + ATP + H2O = ADP + 2 phosphate(in) + H(+). Functionally, part of the ABC transporter complex PstSACB involved in phosphate import. Responsible for energy coupling to the transport system. This Burkholderia pseudomallei (strain 1710b) protein is Phosphate import ATP-binding protein PstB.